Here is a 284-residue protein sequence, read N- to C-terminus: Phosphonates import ATP-binding protein PhnC 2 (284 aa).

In terms of domain architecture, ABC transporter spans 24-264 (IRIDGISVRR…LEARIFPSLA (241 aa)). Position 56 to 63 (56 to 63 (GPSGVGKT)) interacts with ATP.

It belongs to the ABC transporter superfamily. Phosphonates importer (TC 3.A.1.9.1) family. The complex is composed of two ATP-binding proteins (PhnC), two transmembrane proteins (PhnE) and a solute-binding protein (PhnD).

It is found in the cell inner membrane. It catalyses the reaction phosphonate(out) + ATP + H2O = phosphonate(in) + ADP + phosphate + H(+). In terms of biological role, part of the ABC transporter complex PhnCDE involved in phosphonates import. Responsible for energy coupling to the transport system. The sequence is that of Phosphonates import ATP-binding protein PhnC 2 from Rhodopseudomonas palustris (strain ATCC BAA-98 / CGA009).